Consider the following 313-residue polypeptide: Protein KRE1 (313 aa).

A signal peptide spans 1 to 26 (MMRRTLLHSFATLLLSLSLWSAAVMA). The stretch at 72–86 (TTTNDVGTTVTLTQT) is repeat 1. Residues 72–141 (TTTNDVGTTV…LGTTVTLTQT (70 aa)) form a 2 X approximate repeats region. Residues 94 to 114 (PTTTTSTSSTGKTTTTVPTAT) are disordered. Residues 127–141 (TTTNDLGTTVTLTQT) form repeat 2. Residues 147-181 (TSATSSASSSVSSSVSSSGSSSSVKTTTSTGSAVA) show a composition bias toward low complexity. The segment at 147 to 198 (TSATSSASSSVSSSVSSSGSSSSVKTTTSTGSAVAETGTRPDPSTDFTEPPV) is disordered. N288 carries GPI-anchor amidated asparagine lipidation. Residues 289–313 (EAQHLGMSSFTSILGGLLTVLIWFL) constitute a propeptide, removed in mature form.

It belongs to the KRE1 family. In terms of processing, extensively modified; probably through addition of O-linked mannose residues. The GPI-anchor is attached to the protein in the endoplasmic reticulum and serves to target the protein to the cell surface. There, the glucosamine-inositol phospholipid moiety is cleaved off and the GPI-modified mannoprotein is covalently attached via its lipidless GPI glycan remnant to the 1,6-beta-glucan of the outer cell wall layer.

The protein resides in the cell membrane. The protein localises to the secreted. Its subcellular location is the cell wall. Its function is as follows. Involved in a late stage of cell wall 1,6-beta-glucan synthesis and assembly. Has a structural, rather than enzymic, function within cell wall 1,6-beta-glucan assembly and architecture, possibly by being involved in covalently cross-linking 1,6-beta-glucans to other cell wall components such as 1,3-beta-glucan, chitin and certain mannoproteins. Acts as the plasma membrane receptor for the yeast K1 viral toxin. This chain is Protein KRE1 (KRE1), found in Saccharomyces cerevisiae (strain ATCC 204508 / S288c) (Baker's yeast).